We begin with the raw amino-acid sequence, 100 residues long: Large ribosomal subunit protein uL23 (100 aa).

It belongs to the universal ribosomal protein uL23 family. Part of the 50S ribosomal subunit. Contacts protein L29, and trigger factor when it is bound to the ribosome.

One of the early assembly proteins it binds 23S rRNA. One of the proteins that surrounds the polypeptide exit tunnel on the outside of the ribosome. Forms the main docking site for trigger factor binding to the ribosome. The sequence is that of Large ribosomal subunit protein uL23 from Mycobacteroides abscessus (strain ATCC 19977 / DSM 44196 / CCUG 20993 / CIP 104536 / JCM 13569 / NCTC 13031 / TMC 1543 / L948) (Mycobacterium abscessus).